Here is a 195-residue protein sequence, read N- to C-terminus: uncharacterized protein (195 aa).

2 helical membrane passes run 13–32 and 42–64; these read VIGL…FLVA and LSNS…TILV.

The protein resides in the cell membrane. This is an uncharacterized protein from Archaeoglobus fulgidus (strain ATCC 49558 / DSM 4304 / JCM 9628 / NBRC 100126 / VC-16).